The primary structure comprises 174 residues: Small ribosomal subunit protein uS5 (174 aa).

Positions 18–81 (LKDRLVSVNR…EDAKKNLVKI (64 aa)) constitute an S5 DRBM domain.

It belongs to the universal ribosomal protein uS5 family. In terms of assembly, part of the 30S ribosomal subunit. Contacts proteins S4 and S8.

With S4 and S12 plays an important role in translational accuracy. In terms of biological role, located at the back of the 30S subunit body where it stabilizes the conformation of the head with respect to the body. In Flavobacterium psychrophilum (strain ATCC 49511 / DSM 21280 / CIP 103535 / JIP02/86), this protein is Small ribosomal subunit protein uS5.